A 321-amino-acid chain; its full sequence is uncharacterized protein (321 aa).

In terms of domain architecture, HTH lysR-type spans 1-58 (MTPAQLRAYSAVVRLGSVRAAAAELGLSDAGVSMHVAALRKELDDPLFTRTGAGLAFT). Residues 18-37 (VRAAAAELGLSDAGVSMHVA) constitute a DNA-binding region (H-T-H motif).

This sequence belongs to the LysR transcriptional regulatory family.

This is an uncharacterized protein from Mycobacterium tuberculosis (strain CDC 1551 / Oshkosh).